A 1290-amino-acid chain; its full sequence is Period circadian protein homolog 1 (1290 aa).

Residues 1 to 134 (MSGPLEGADG…SSEQSARART (134 aa)) are disordered. The interval 1–151 (MSGPLEGADG…LRELKLRLPP (151 aa)) is interaction with BTRC. A compositionally biased stretch (pro residues) spans 25–38 (VPSPGPPQHRPCPG). 2 stretches are compositionally biased toward low complexity: residues 48–57 (NSNGSSGNES) and 64–115 (GASQ…ASSE). Positions 116-132 (QDNPSTSGCSSEQSARA) are enriched in polar residues. T121 is modified (phosphothreonine; by CSNK1E). Phosphoserine; by CSNK1E is present on residues S122 and S126. A Nuclear export signal 1 motif is present at residues 138-147 (LMTALRELKL). PAS domains follow at residues 208-275 (ITSE…PSRL) and 348-414 (YEAP…KILQ). In terms of domain architecture, PAC spans 422-465 (HSPIRFCARNGEYVTMDTSWAGFVHPWSRKVAFVLGRHKVRTAP). The short motif at 489–498 (LSEQIHRLLL) is the Nuclear export signal 2 element. 2 disordered regions span residues 508–544 (GLCG…PAPV) and 646–698 (TTKR…KEPV). Composition is skewed to low complexity over residues 517 to 533 (SPGP…SNGG) and 652 to 662 (ASSSSYTTSSA). Residues 596–815 (ELEAGSAPVQ…GLDSSSTAPS (220 aa)) are required for phosphorylation by CSNK1E. A phosphoserine mark is found at S661, S663, and S704. Disordered regions lie at residues 749-772 (GLAP…APDA), 805-874 (RGLD…PPAT), and 938-977 (ALQT…FNSR). Residues 751–769 (APGPAPSPAPSPTVAPDPA) are compositionally biased toward pro residues. A Phosphoserine modification is found at S815. The Nuclear localization signal motif lies at 827–843 (APPSRRHHCRSKAKRSR). The segment covering 830–847 (SRRHHCRSKAKRSRHHQN) has biased composition (basic residues). Over residues 860–874 (SPVPPSTPWPTPPAT) the composition is skewed to pro residues. Residues 950 to 961 (ASHSPSPSLPAL) show a composition bias toward low complexity. 2 positions are modified to phosphoserine: S979 and S980. Positions 982–989 (LQLNLLQL) match the Nuclear export signal 3 motif. The disordered stretch occupies residues 996–1037 (EGAAVAGGPGSSAGPPPPSAEAAEPEARLAEVTESSNQDALS). The short motif at 1043-1047 (LELLL) is the LXXLL element. Low complexity predominate over residues 1051–1062 (SRSGTGSAASGS). Disordered stretches follow at residues 1051–1098 (SRSG…SKYF) and 1207–1290 (SSTQ…NCTS). The span at 1063–1077 (LGSGLGSGSGSGSHE) shows a compositional bias: gly residues. The segment covering 1078 to 1095 (GGSTSASITRSSQSSHTS) has biased composition (low complexity). Residues 1149–1290 (SRDMTSVLKQ…ALPTAGNCTS (142 aa)) form a CRY binding domain region. The segment covering 1236 to 1248 (GEQGSSGGGSGEG) has biased composition (gly residues).

In terms of assembly, homodimer. Component of the circadian core oscillator, which includes the CRY proteins, CLOCK or NPAS2, BMAL1 or BMAL2, CSNK1D and/or CSNK1E, TIMELESS, and the PER proteins. Interacts directly with TIMELESS, PER2, PER3, CRY1 and CRY2. Interacts with BMAL1 and CLOCK. Interacts with GPRASP1. Interacts (phosphorylated) with BTRC and FBXW11; the interactions trigger proteasomal degradation. Interacts with NONO, WDR5 and SFPQ. Interacts with USP2. Interacts with HNF4A. In terms of processing, phosphorylated on serine residues by CSNK1D, CSNK1E and probably also by CSNK1G2. Phosphorylation by CSNK1D or CSNK1E promotes nuclear location of PER proteins as well as ubiquitination and subsequent degradation. May be dephosphorylated by PP1. Ubiquitinated; requires phosphorylation by CSNK1E and interaction with BTRC and FBXW11. Deubiquitinated by USP2. In terms of tissue distribution, widely expressed. Expressed in hair follicles (at protein level). Found in heart, brain, placenta, lung, liver, skeletal muscle, pancreas, kidney, spleen, thymus, prostate, testis, ovary and small intestine. Highest level in skeletal muscle.

Its subcellular location is the nucleus. It localises to the cytoplasm. Its function is as follows. Transcriptional repressor which forms a core component of the circadian clock. The circadian clock, an internal time-keeping system, regulates various physiological processes through the generation of approximately 24 hour circadian rhythms in gene expression, which are translated into rhythms in metabolism and behavior. It is derived from the Latin roots 'circa' (about) and 'diem' (day) and acts as an important regulator of a wide array of physiological functions including metabolism, sleep, body temperature, blood pressure, endocrine, immune, cardiovascular, and renal function. Consists of two major components: the central clock, residing in the suprachiasmatic nucleus (SCN) of the brain, and the peripheral clocks that are present in nearly every tissue and organ system. Both the central and peripheral clocks can be reset by environmental cues, also known as Zeitgebers (German for 'timegivers'). The predominant Zeitgeber for the central clock is light, which is sensed by retina and signals directly to the SCN. The central clock entrains the peripheral clocks through neuronal and hormonal signals, body temperature and feeding-related cues, aligning all clocks with the external light/dark cycle. Circadian rhythms allow an organism to achieve temporal homeostasis with its environment at the molecular level by regulating gene expression to create a peak of protein expression once every 24 hours to control when a particular physiological process is most active with respect to the solar day. Transcription and translation of core clock components (CLOCK, NPAS2, BMAL1, BMAL2, PER1, PER2, PER3, CRY1 and CRY2) plays a critical role in rhythm generation, whereas delays imposed by post-translational modifications (PTMs) are important for determining the period (tau) of the rhythms (tau refers to the period of a rhythm and is the length, in time, of one complete cycle). A diurnal rhythm is synchronized with the day/night cycle, while the ultradian and infradian rhythms have a period shorter and longer than 24 hours, respectively. Disruptions in the circadian rhythms contribute to the pathology of cardiovascular diseases, cancer, metabolic syndromes and aging. A transcription/translation feedback loop (TTFL) forms the core of the molecular circadian clock mechanism. Transcription factors, CLOCK or NPAS2 and BMAL1 or BMAL2, form the positive limb of the feedback loop, act in the form of a heterodimer and activate the transcription of core clock genes and clock-controlled genes (involved in key metabolic processes), harboring E-box elements (5'-CACGTG-3') within their promoters. The core clock genes: PER1/2/3 and CRY1/2 which are transcriptional repressors form the negative limb of the feedback loop and interact with the CLOCK|NPAS2-BMAL1|BMAL2 heterodimer inhibiting its activity and thereby negatively regulating their own expression. This heterodimer also activates nuclear receptors NR1D1/2 and RORA/B/G, which form a second feedback loop and which activate and repress BMAL1 transcription, respectively. Regulates circadian target genes expression at post-transcriptional levels, but may not be required for the repression at transcriptional level. Controls PER2 protein decay. Represses CRY2 preventing its repression on CLOCK/BMAL1 target genes such as FXYD5 and SCNN1A in kidney and PPARA in liver. Besides its involvement in the maintenance of the circadian clock, has an important function in the regulation of several processes. Participates in the repression of glucocorticoid receptor NR3C1/GR-induced transcriptional activity by reducing the association of NR3C1/GR to glucocorticoid response elements (GREs) by BMAL1:CLOCK. Plays a role in the modulation of the neuroinflammatory state via the regulation of inflammatory mediators release, such as CCL2 and IL6. In spinal astrocytes, negatively regulates the MAPK14/p38 and MAPK8/JNK MAPK cascades as well as the subsequent activation of NFkappaB. Coordinately regulates the expression of multiple genes that are involved in the regulation of renal sodium reabsorption. Can act as gene expression activator in a gene and tissue specific manner, in kidney enhances WNK1 and SLC12A3 expression in collaboration with CLOCK. Modulates hair follicle cycling. Represses the CLOCK-BMAL1 induced transcription of BHLHE40/DEC1. The sequence is that of Period circadian protein homolog 1 (PER1) from Homo sapiens (Human).